Consider the following 314-residue polypeptide: Trihelix transcription factor ASR3 (314 aa).

The segment at 1–34 is disordered; the sequence is MALEQLGLGVSAVDGGENSSAPSNDGGDDGVKTA. The Myb-like domain occupies 38 to 104; the sequence is RWTRQEILVL…QCRKRWSNLA (67 aa). Positions 84–91 match the Nuclear localization signal motif; sequence CKRHGVNR. Residues 161–165 carry the EAR 1 motif; it reads LSLGL. Position 189 is a phosphothreonine; by MAPK4 (Thr189). The tract at residues 207–255 is disordered; it reads CVADQGRVKEKQPEAANVEGGSTSQEERKRKRTSFGEKEEEEEEGETKK. An EAR 2 motif is present at residues 280 to 284; it reads LNLKL.

In terms of assembly, homodimer. Interacts directly with MPK4. Phosphorylated on Thr-189 by MPK4 in response to microbe-associated molecular patterns (MAMPs, e.g. flg22, elf18, chitin, and LPS). This phosphorylation enhances DNA-binding and thus negatively regulates immune gene expression.

It is found in the nucleus. Transcriptional repressor that binds DNA and plays a negative role in regulating microbe-associated molecular patterns-(MAMPs, e.g. flg22, elf18, chitin, and LPS) triggered immunity (PTI) by negatively regulating immune gene expression. The chain is Trihelix transcription factor ASR3 from Arabidopsis thaliana (Mouse-ear cress).